The chain runs to 884 residues: Bifunctional heparan sulfate N-deacetylase/N-sulfotransferase 2 (884 aa).

At 1–18 (MLKLWKVVRPARQLELHR) the chain is on the cytoplasmic side. The chain crosses the membrane as a helical; Signal-anchor for type II membrane protein span at residues 19 to 39 (LILLLIAFSLGSMGFLAYYVS). At 40–884 (TSPKAKEPLP…REELQHSSSG (845 aa)) the chain is on the lumenal side. A heparan sulfate N-deacetylase 2 region spans residues 41-598 (SPKAKEPLPL…KRHKDIWSKE (558 aa)). The segment at 49 to 82 (PLPLGDCSSSGAAGGPGPVRPPVPPRPPRPPETA) is disordered. The segment covering 66 to 79 (PVRPPVPPRPPRPP) has biased composition (pro residues). N-linked (GlcNAc...) asparagine glycosylation is found at Asn351 and Asn401. Positions 599 to 884 (KTCDRLPKFL…REELQHSSSG (286 aa)) are heparan sulfate N-sulfotransferase 2. The active-site For sulfotransferase activity is the Lys614. 3'-phosphoadenylyl sulfate is bound at residue 614–618 (KTGTT). Asn667 carries N-linked (GlcNAc...) asparagine glycosylation. Ser712 contacts 3'-phosphoadenylyl sulfate. N-linked (GlcNAc...) asparagine glycosylation is found at Asn727 and Asn803. An intrachain disulfide couples Cys818 to Cys828. 833 to 837 (KGRKY) lines the 3'-phosphoadenylyl sulfate pocket.

It belongs to the sulfotransferase 1 family. NDST subfamily. Monomer.

Its subcellular location is the golgi apparatus membrane. It carries out the reaction alpha-D-glucosaminyl-[heparan sulfate](n) + 3'-phosphoadenylyl sulfate = N-sulfo-alpha-D-glucosaminyl-[heparan sulfate](n) + adenosine 3',5'-bisphosphate + 2 H(+). It functions in the pathway glycan metabolism; heparan sulfate biosynthesis. The protein operates within glycan metabolism; heparin biosynthesis. Essential bifunctional enzyme that catalyzes both the N-deacetylation and the N-sulfation of glucosamine (GlcNAc) of the glycosaminoglycan in heparan sulfate. Modifies the GlcNAc-GlcA disaccharide repeating sugar backbone to make N-sulfated heparosan, a prerequisite substrate for later modifications in heparin biosynthesis. Plays a role in determining the extent and pattern of sulfation of heparan sulfate. Required for the exosomal release of SDCBP, CD63 and syndecan. In Bos taurus (Bovine), this protein is Bifunctional heparan sulfate N-deacetylase/N-sulfotransferase 2 (NDST2).